We begin with the raw amino-acid sequence, 203 residues long: Interferon type B (203 aa).

The first 27 residues, 1 to 27, serve as a signal peptide directing secretion; the sequence is MTANHQSPGMHSILLLLLLPALTTTFS. 2 disulfide bridges follow: Cys-28–Cys-125 and Cys-57–Cys-164. 2 N-linked (GlcNAc...) asparagine glycosylation sites follow: Asn-37 and Asn-160.

Belongs to the alpha/beta interferon family.

It is found in the secreted. Its function is as follows. Has antiviral activities. In Gallus gallus (Chicken), this protein is Interferon type B (IFNB).